The following is a 35-amino-acid chain: FECSISCEIEKKGESCKPKKCKGGWKCKFNMCVKV.

3 cysteine pairs are disulfide-bonded: Cys-3–Cys-16, Cys-7–Cys-27, and Cys-21–Cys-32.

The protein belongs to the neurotoxin 12 (Hwtx-2) family. 02 (Hwtx-2) subfamily. As to expression, expressed by the venom gland.

The protein resides in the secreted. In terms of biological role, blocks neuromuscular transmission. Acts cooperatively to potentiate the activity of huwentoxin-I. Paralyzes locusts and kills mice following intracerebroventricular injection. This Cyriopagopus schmidti (Chinese bird spider) protein is U1-theraphotoxin-Hs1f.